The primary structure comprises 270 residues: Large ribosomal subunit protein uL10 (270 aa).

Residues 234–270 (VTELEAGKTRPKREGNRRQAMNGDEMDEDQSSDEDSD) form a disordered region. Residues 238–250 (EAGKTRPKREGNR) show a composition bias toward basic and acidic residues. The span at 257 to 270 (DEMDEDQSSDEDSD) shows a compositional bias: acidic residues.

Belongs to the universal ribosomal protein uL10 family. In terms of assembly, associates with the pre-60S ribosomal particle.

The protein resides in the nucleus. It is found in the nucleolus. The protein localises to the cytoplasm. Functionally, component of the ribosome assembly machinery. Nuclear paralog of the ribosomal protein P0, it binds pre-60S subunits at an early stage of assembly in the nucleolus, and is replaced by P0 in cytoplasmic pre-60S subunits and mature 80S ribosomes. This chain is Large ribosomal subunit protein uL10, found in Chaetomium thermophilum (strain DSM 1495 / CBS 144.50 / IMI 039719) (Thermochaetoides thermophila).